Here is a 526-residue protein sequence, read N- to C-terminus: Putative ankyrin repeat protein R840 (526 aa).

15 ANK repeats span residues Thr-78–Ser-107, Arg-108–Ser-137, Lys-139–Asp-167, Asp-169–Ser-197, Asn-198–Asn-227, Ser-229–Ile-255, Asp-256–Ser-285, Glu-286–Ser-315, Tyr-317–Asn-345, Ile-346–Val-375, Asp-376–Val-405, Asn-406–Ile-435, Asn-437–Leu-467, Ala-468–Ala-497, and Asn-499–Ser-526.

In Acanthamoeba polyphaga (Amoeba), this protein is Putative ankyrin repeat protein R840.